We begin with the raw amino-acid sequence, 144 residues long: Large ribosomal subunit protein uL16 (144 aa).

The segment covering 1-17 (MLQPKKTKFRRQQKGRA) has biased composition (basic residues). Residues 1-22 (MLQPKKTKFRRQQKGRAKGNAQ) are disordered.

It belongs to the universal ribosomal protein uL16 family. As to quaternary structure, part of the 50S ribosomal subunit.

Its function is as follows. Binds 23S rRNA and is also seen to make contacts with the A and possibly P site tRNAs. The sequence is that of Large ribosomal subunit protein uL16 from Bacteroides thetaiotaomicron (strain ATCC 29148 / DSM 2079 / JCM 5827 / CCUG 10774 / NCTC 10582 / VPI-5482 / E50).